We begin with the raw amino-acid sequence, 117 residues long: Circadian clock oscillator protein KaiB (117 aa).

The protein belongs to the KaiB family. As to quaternary structure, may undergo a major conformational rearrangment; in the free state forms homooligomers. When bound to KaiC switches to a monomeric thioredoxin-fold (KaiB(fs)). The active oscillator complex is probably KaiC(6):KaiB(6).

Its function is as follows. Component of the KaiBC clock protein complex, which constitutes the main circadian regulator in cyanobacteria; it may modify the ATPase activity of KaiC. Functionally, may be a metamorphic protein which reversibly switches between an inactive tetrameric fold and a rare, thioredoxin-like monomeric fold (KaiB(fs)). KaiB(fs) binds phospho-KaiC, and perhaps clock output effectors. In Prochlorococcus marinus (strain SARG / CCMP1375 / SS120), this protein is Circadian clock oscillator protein KaiB.